An 83-amino-acid chain; its full sequence is Small ribosomal subunit protein eS21 (83 aa).

M1 carries the post-translational modification N-acetylmethionine. K41 is covalently cross-linked (Glycyl lysine isopeptide (Lys-Gly) (interchain with G-Cter in SUMO2)).

Belongs to the eukaryotic ribosomal protein eS21 family. Component of the 40S small ribosomal subunit.

It localises to the cytoplasm. Its subcellular location is the cytosol. The protein localises to the rough endoplasmic reticulum. Its function is as follows. Component of the small ribosomal subunit. The ribosome is a large ribonucleoprotein complex responsible for the synthesis of proteins in the cell. The chain is Small ribosomal subunit protein eS21 (RPS21) from Oryctolagus cuniculus (Rabbit).